The sequence spans 113 residues: U11-theraphotoxin-Hhn1a (113 aa).

Residues 1 to 21 (MNTVRVTFLLVFVLAVSLGQA) form the signal peptide. Residues 22–74 (DKDENRMEMQEKTEQGKSYLDFAENLLLQKLEELEAKPLEEDSEESRNSRQKR) constitute a propeptide that is removed on maturation. A compositionally biased stretch (basic and acidic residues) spans 57–69 (AKPLEEDSEESRN). Positions 57–83 (AKPLEEDSEESRNSRQKRCIGEGVPCD) are disordered. 3 cysteine pairs are disulfide-bonded: Cys75–Cys90, Cys82–Cys95, and Cys89–Cys110.

It belongs to the neurotoxin 14 (magi-1) family. 01 (HNTX-16) subfamily. In terms of tissue distribution, expressed by the venom gland.

It is found in the secreted. Its function is as follows. Probable ion channel inhibitor. This Cyriopagopus hainanus (Chinese bird spider) protein is U11-theraphotoxin-Hhn1a.